The chain runs to 432 residues: UDP-N-acetylglucosamine 1-carboxyvinyltransferase (432 aa).

22 to 23 contacts phosphoenolpyruvate; the sequence is KN. Arg96 provides a ligand contact to UDP-N-acetyl-alpha-D-glucosamine. Cys120 acts as the Proton donor in catalysis. 2-(S-cysteinyl)pyruvic acid O-phosphothioketal is present on Cys120. UDP-N-acetyl-alpha-D-glucosamine contacts are provided by residues 125 to 129, Asp310, and Ile332; that span reads RPVDL.

It belongs to the EPSP synthase family. MurA subfamily.

The protein resides in the cytoplasm. The enzyme catalyses phosphoenolpyruvate + UDP-N-acetyl-alpha-D-glucosamine = UDP-N-acetyl-3-O-(1-carboxyvinyl)-alpha-D-glucosamine + phosphate. It functions in the pathway cell wall biogenesis; peptidoglycan biosynthesis. In terms of biological role, cell wall formation. Adds enolpyruvyl to UDP-N-acetylglucosamine. In Caulobacter sp. (strain K31), this protein is UDP-N-acetylglucosamine 1-carboxyvinyltransferase.